The primary structure comprises 201 residues: MEKFTKIQGIAAPMPLVNIDTDMIIPKVFLKSIQRTGFGKNLFDEMRYNRDGTEIPDFVLNKPQYRDAEILVAGDNFGCGSSREHAPWAIADFGIKCIISTSFADIFFNNSFKNGILPIVLPQEQVDILMKDAEKGANARMTVDLEAQEITTSDGEVIPFEVDAFKKHCLLNGLDDIGLTMEKAAAIDTFEAQAAQARPWV.

It belongs to the LeuD family. LeuD type 1 subfamily. Heterodimer of LeuC and LeuD.

The catalysed reaction is (2R,3S)-3-isopropylmalate = (2S)-2-isopropylmalate. The protein operates within amino-acid biosynthesis; L-leucine biosynthesis; L-leucine from 3-methyl-2-oxobutanoate: step 2/4. In terms of biological role, catalyzes the isomerization between 2-isopropylmalate and 3-isopropylmalate, via the formation of 2-isopropylmaleate. In Ruegeria pomeroyi (strain ATCC 700808 / DSM 15171 / DSS-3) (Silicibacter pomeroyi), this protein is 3-isopropylmalate dehydratase small subunit.